The chain runs to 301 residues: ATP synthase gamma chain (301 aa).

Belongs to the ATPase gamma chain family. F-type ATPases have 2 components, CF(1) - the catalytic core - and CF(0) - the membrane proton channel. CF(1) has five subunits: alpha(3), beta(3), gamma(1), delta(1), epsilon(1). CF(0) has three main subunits: a, b and c.

It is found in the cell inner membrane. Its function is as follows. Produces ATP from ADP in the presence of a proton gradient across the membrane. The gamma chain is believed to be important in regulating ATPase activity and the flow of protons through the CF(0) complex. The protein is ATP synthase gamma chain of Helicobacter pylori (strain ATCC 700392 / 26695) (Campylobacter pylori).